Reading from the N-terminus, the 291-residue chain is Putative transport permease ycf38 (291 aa).

Transmembrane regions (helical) follow at residues 47 to 67 (ATLM…GGLF), 87 to 107 (SGII…PLMF), 135 to 155 (FMTC…LFMG), 165 to 185 (MIFG…SLAL), 195 to 215 (LLAF…ALAP), and 262 to 282 (ICLG…AYLV). In terms of domain architecture, ABC transmembrane type-2 spans 47 to 289 (ATLMAGIIQP…YLVSNILKAK (243 aa)).

Belongs to the ABC-2 integral membrane protein family.

It localises to the plastid. Its subcellular location is the chloroplast membrane. The protein is Putative transport permease ycf38 (ycf38) of Pyropia yezoensis (Susabi-nori).